A 311-amino-acid chain; its full sequence is tRNA pseudouridine synthase B (311 aa).

The active-site Nucleophile is Asp-39. Positions 237–268 (RELSEQETTEISFGRRIAAGPGAGTPDAATAE) are disordered. The segment covering 254-268 (AAGPGAGTPDAATAE) has biased composition (low complexity).

It belongs to the pseudouridine synthase TruB family. Type 1 subfamily.

The enzyme catalyses uridine(55) in tRNA = pseudouridine(55) in tRNA. Responsible for synthesis of pseudouridine from uracil-55 in the psi GC loop of transfer RNAs. This chain is tRNA pseudouridine synthase B, found in Paenarthrobacter aurescens (strain TC1).